A 296-amino-acid chain; its full sequence is Phosphatidylglycerol--prolipoprotein diacylglyceryl transferase (296 aa).

The next 7 membrane-spanning stretches (helical) occupy residues 17–37, 59–79, 97–117, 129–149, 204–224, 230–250, and 257–277; these read LAVR…IVVG, MMFY…VLFY, GGMS…LFAW, FVAP…FING, SQLY…FLFA, MGAI…TVEF, and FLGL…PMIL. Arg142 lines the a 1,2-diacyl-sn-glycero-3-phospho-(1'-sn-glycerol) pocket.

Belongs to the Lgt family.

It is found in the cell inner membrane. The catalysed reaction is L-cysteinyl-[prolipoprotein] + a 1,2-diacyl-sn-glycero-3-phospho-(1'-sn-glycerol) = an S-1,2-diacyl-sn-glyceryl-L-cysteinyl-[prolipoprotein] + sn-glycerol 1-phosphate + H(+). The protein operates within protein modification; lipoprotein biosynthesis (diacylglyceryl transfer). In terms of biological role, catalyzes the transfer of the diacylglyceryl group from phosphatidylglycerol to the sulfhydryl group of the N-terminal cysteine of a prolipoprotein, the first step in the formation of mature lipoproteins. The sequence is that of Phosphatidylglycerol--prolipoprotein diacylglyceryl transferase from Burkholderia cenocepacia (strain HI2424).